Here is a 355-residue protein sequence, read N- to C-terminus: Nuclear speckle splicing regulatory protein 1 homolog (355 aa).

Residues 1-57 are disordered; sequence MSGTGFRYGLNVMKKKKPNESSNRITFTEDDSSSSEQEHAPIPNSFSSQITAASDAS. The span at 44-54 shows a compositional bias: polar residues; that stretch reads NSFSSQITAAS. Positions 99-162 form a coiled coil; the sequence is MENLIESAKK…EDRKEEDEKS (64 aa). Disordered regions lie at residues 253–292 and 325–355; these read SANN…HGTY and KIHA…ATNP. A compositionally biased stretch (basic and acidic residues) spans 280–289; sequence YHQDRPDKRH. Residues 293-326 are a coiled coil; sequence SLEEIDKQRKEFENRQRLQKEKEFQKSREAALKI. Residues 329 to 339 show a composition bias toward polar residues; sequence SRNTTETQVQS. A compositionally biased stretch (basic residues) spans 346–355; sequence QRKKKAATNP.

It belongs to the NSRP1 family.

This chain is Nuclear speckle splicing regulatory protein 1 homolog, found in Schizosaccharomyces pombe (strain 972 / ATCC 24843) (Fission yeast).